The primary structure comprises 477 residues: Beta-agarase D (477 aa).

An N-terminal signal peptide occupies residues 1 to 20 (MKRSILLAIIAFLQFFTSYG). A GH16 domain is found at 22 to 378 (YDWDNVPIPA…WIRVYKPVNA (357 aa)). Residues 94–104 (MQNHVAVSGGN), 123–125 (NNT), Glu-174, Glu-179, Arg-206, and Glu-340 each bind substrate. The active-site Nucleophile is the Glu-174. Glu-179 (proton donor) is an active-site residue. Residues 382-391 (NSAETTSTVE) show a composition bias toward low complexity. The segment at 382–402 (NSAETTSTVEKPASFEPQGQP) is disordered.

It belongs to the glycosyl hydrolase 16 family.

It is found in the secreted. It catalyses the reaction Hydrolysis of (1-&gt;4)-beta-D-galactosidic linkages in agarose, giving the tetramer as the predominant product.. Cleaves the beta-1,4-linkages between beta-D-galactose and alpha-L-3,6-anhydro-galactose residues in agarose. Cleaves agarose in a random manner with retention of the anomeric-bond configuration, producing beta-anomers that give rise progressively to alpha-anomers when mutarotation takes place. Requires at least 4 consecutive agarose units and is highly intolerant to modifications. This chain is Beta-agarase D (agaD), found in Zobellia galactanivorans (strain DSM 12802 / CCUG 47099 / CIP 106680 / NCIMB 13871 / Dsij).